A 179-amino-acid polypeptide reads, in one-letter code: Ribosome maturation factor RimM (179 aa).

A PRC barrel domain is found at 99–174 (EEDEYYFDQI…IMIVDLPEGL (76 aa)).

This sequence belongs to the RimM family. In terms of assembly, binds ribosomal protein uS19.

The protein resides in the cytoplasm. In terms of biological role, an accessory protein needed during the final step in the assembly of 30S ribosomal subunit, possibly for assembly of the head region. Essential for efficient processing of 16S rRNA. May be needed both before and after RbfA during the maturation of 16S rRNA. It has affinity for free ribosomal 30S subunits but not for 70S ribosomes. This chain is Ribosome maturation factor RimM, found in Natranaerobius thermophilus (strain ATCC BAA-1301 / DSM 18059 / JW/NM-WN-LF).